We begin with the raw amino-acid sequence, 524 residues long: Metal transporter Nramp2 (524 aa).

The disordered stretch occupies residues 34 to 58 (AYDSDDKVSIAVSDSDSEDGGGGGG). 12 consecutive transmembrane segments (helical) span residues 70–90 (LWRF…PGNL), 98–118 (AAAG…GALV), 155–175 (LALV…IKIL), 179–199 (TVPL…FLFL), 207–227 (LEAF…IMFG), 253–273 (AVGI…SALV), 295–315 (IESI…TTVF), 341–361 (YGTA…ASGQ), 389–409 (AMIT…FFDT), 420–440 (ALNV…ITLV), 457–477 (VISW…ILSF), and 486–506 (LVRS…VYLI).

This sequence belongs to the NRAMP (TC 2.A.55) family.

It is found in the membrane. In terms of biological role, probable metal transporter. The polypeptide is Metal transporter Nramp2 (NRAMP2) (Oryza sativa subsp. japonica (Rice)).